Consider the following 110-residue polypeptide: UPF0122 protein LMOf2365_1829 (110 aa).

The protein belongs to the UPF0122 family.

Its function is as follows. Might take part in the signal recognition particle (SRP) pathway. This is inferred from the conservation of its genetic proximity to ftsY/ffh. May be a regulatory protein. The protein is UPF0122 protein LMOf2365_1829 of Listeria monocytogenes serotype 4b (strain F2365).